Consider the following 364-residue polypeptide: Dual-specificity RNA methyltransferase RlmN (364 aa).

Catalysis depends on E91, which acts as the Proton acceptor. Residues 102 to 337 enclose the Radical SAM core domain; that stretch reads GTLRITQCLS…AIIRKSKGQD (236 aa). Cysteines 109 and 342 form a disulfide. The [4Fe-4S] cluster site is built by C116, C120, and C123. Residues 169 to 170, S201, 223 to 225, and N299 contribute to the S-adenosyl-L-methionine site; these read GE and SLH. C342 acts as the S-methylcysteine intermediate in catalysis.

The protein belongs to the radical SAM superfamily. RlmN family. The cofactor is [4Fe-4S] cluster.

It localises to the cytoplasm. The enzyme catalyses adenosine(2503) in 23S rRNA + 2 reduced [2Fe-2S]-[ferredoxin] + 2 S-adenosyl-L-methionine = 2-methyladenosine(2503) in 23S rRNA + 5'-deoxyadenosine + L-methionine + 2 oxidized [2Fe-2S]-[ferredoxin] + S-adenosyl-L-homocysteine. It catalyses the reaction adenosine(37) in tRNA + 2 reduced [2Fe-2S]-[ferredoxin] + 2 S-adenosyl-L-methionine = 2-methyladenosine(37) in tRNA + 5'-deoxyadenosine + L-methionine + 2 oxidized [2Fe-2S]-[ferredoxin] + S-adenosyl-L-homocysteine. Specifically methylates position 2 of adenine 2503 in 23S rRNA and position 2 of adenine 37 in tRNAs. m2A2503 modification seems to play a crucial role in the proofreading step occurring at the peptidyl transferase center and thus would serve to optimize ribosomal fidelity. This Nitratidesulfovibrio vulgaris (strain DP4) (Desulfovibrio vulgaris) protein is Dual-specificity RNA methyltransferase RlmN.